Consider the following 414-residue polypeptide: Succinylornithine transaminase (414 aa).

K260 is subject to N6-(pyridoxal phosphate)lysine.

The protein belongs to the class-III pyridoxal-phosphate-dependent aminotransferase family. AstC subfamily. Pyridoxal 5'-phosphate is required as a cofactor.

It catalyses the reaction N(2)-succinyl-L-ornithine + 2-oxoglutarate = N-succinyl-L-glutamate 5-semialdehyde + L-glutamate. It participates in amino-acid degradation; L-arginine degradation via AST pathway; L-glutamate and succinate from L-arginine: step 3/5. In terms of biological role, catalyzes the transamination of N(2)-succinylornithine and alpha-ketoglutarate into N(2)-succinylglutamate semialdehyde and glutamate. Can also act as an acetylornithine aminotransferase. The sequence is that of Succinylornithine transaminase from Yersinia pseudotuberculosis serotype I (strain IP32953).